The primary structure comprises 416 residues: Glutamyl-tRNA reductase (416 aa).

Substrate is bound by residues 50 to 53 (TCNR), S109, 114 to 116 (EPQ), and Q120. C51 acts as the Nucleophile in catalysis. An NADP(+)-binding site is contributed by 189 to 194 (GAGEMI).

It belongs to the glutamyl-tRNA reductase family. Homodimer.

It carries out the reaction (S)-4-amino-5-oxopentanoate + tRNA(Glu) + NADP(+) = L-glutamyl-tRNA(Glu) + NADPH + H(+). It functions in the pathway porphyrin-containing compound metabolism; protoporphyrin-IX biosynthesis; 5-aminolevulinate from L-glutamyl-tRNA(Glu): step 1/2. Its function is as follows. Catalyzes the NADPH-dependent reduction of glutamyl-tRNA(Glu) to glutamate 1-semialdehyde (GSA). This Vesicomyosocius okutanii subsp. Calyptogena okutanii (strain HA) protein is Glutamyl-tRNA reductase.